The following is a 251-amino-acid chain: Ubiquinone/menaquinone biosynthesis C-methyltransferase UbiE (251 aa).

S-adenosyl-L-methionine-binding positions include Thr74, Asp95, and 123-124 (NA).

Belongs to the class I-like SAM-binding methyltransferase superfamily. MenG/UbiE family.

The enzyme catalyses a 2-demethylmenaquinol + S-adenosyl-L-methionine = a menaquinol + S-adenosyl-L-homocysteine + H(+). It carries out the reaction a 2-methoxy-6-(all-trans-polyprenyl)benzene-1,4-diol + S-adenosyl-L-methionine = a 5-methoxy-2-methyl-3-(all-trans-polyprenyl)benzene-1,4-diol + S-adenosyl-L-homocysteine + H(+). The protein operates within quinol/quinone metabolism; menaquinone biosynthesis; menaquinol from 1,4-dihydroxy-2-naphthoate: step 2/2. It participates in cofactor biosynthesis; ubiquinone biosynthesis. Methyltransferase required for the conversion of demethylmenaquinol (DMKH2) to menaquinol (MKH2) and the conversion of 2-polyprenyl-6-methoxy-1,4-benzoquinol (DDMQH2) to 2-polyprenyl-3-methyl-6-methoxy-1,4-benzoquinol (DMQH2). This chain is Ubiquinone/menaquinone biosynthesis C-methyltransferase UbiE, found in Shewanella sediminis (strain HAW-EB3).